The sequence spans 511 residues: Histidine ammonia-lyase (511 aa).

A cross-link (5-imidazolinone (Ala-Gly)) is located at residues 144–146; that stretch reads ASG. The residue at position 145 (Ser-145) is a 2,3-didehydroalanine (Ser).

The protein belongs to the PAL/histidase family. Contains an active site 4-methylidene-imidazol-5-one (MIO), which is formed autocatalytically by cyclization and dehydration of residues Ala-Ser-Gly.

The protein resides in the cytoplasm. The catalysed reaction is L-histidine = trans-urocanate + NH4(+). It participates in amino-acid degradation; L-histidine degradation into L-glutamate; N-formimidoyl-L-glutamate from L-histidine: step 1/3. In Halalkalibacterium halodurans (strain ATCC BAA-125 / DSM 18197 / FERM 7344 / JCM 9153 / C-125) (Bacillus halodurans), this protein is Histidine ammonia-lyase.